The sequence spans 153 residues: Superoxide dismutase [Cu-Zn] (153 aa).

The Cu cation site is built by His-45, His-47, and His-62. A disulfide bond links Cys-56 and Cys-145. Zn(2+) contacts are provided by His-62, His-70, His-79, and Asp-82. Cu cation is bound at residue His-119.

This sequence belongs to the Cu-Zn superoxide dismutase family. Homodimer. Requires Cu cation as cofactor. Zn(2+) is required as a cofactor.

The protein localises to the cytoplasm. It catalyses the reaction 2 superoxide + 2 H(+) = H2O2 + O2. Its function is as follows. Destroys radicals which are normally produced within the cells and which are toxic to biological systems. In Drosophila yakuba (Fruit fly), this protein is Superoxide dismutase [Cu-Zn].